The chain runs to 94 residues: uncharacterized protein (94 aa).

A run of 2 helical transmembrane segments spans residues 9-29 and 34-54; these read TLAKIVCTVTLITLYFYFFST and LIELAVQMFFALIGLFWVFIV.

Its subcellular location is the cell membrane. This is an uncharacterized protein from Bacillus subtilis (strain 168).